A 261-amino-acid polypeptide reads, in one-letter code: Small ribosomal subunit protein uS2 (261 aa).

Ser2 is subject to N-acetylserine. Residues 215–261 (AEEAKTTEDVEEAAPVDADEWTGETEEVDWAESGATPAVEDAAASNW) are disordered. Residues 223–244 (DVEEAAPVDADEWTGETEEVDW) are compositionally biased toward acidic residues.

This sequence belongs to the universal ribosomal protein uS2 family. As to quaternary structure, component of the small ribosomal subunit. Mature ribosomes consist of a small (40S) and a large (60S) subunit. The 40S subunit contains about 33 different proteins and 1 molecule of RNA (18S). The 60S subunit contains about 49 different proteins and 3 molecules of RNA (25S, 5.8S and 5S). Interacts with RPS21.

Its subcellular location is the cytoplasm. Its function is as follows. Required for the assembly and/or stability of the 40S ribosomal subunit. Required for the processing of the 20S rRNA-precursor to mature 18S rRNA in a late step of the maturation of 40S ribosomal subunits. The chain is Small ribosomal subunit protein uS2 from Scheffersomyces stipitis (strain ATCC 58785 / CBS 6054 / NBRC 10063 / NRRL Y-11545) (Yeast).